A 207-amino-acid polypeptide reads, in one-letter code: Galactoside O-acetyltransferase (207 aa).

Acetyl-CoA is bound at residue Asn-87. His-117 functions as the Proton donor/acceptor in the catalytic mechanism. Residues Ala-144, Ala-162, 167 to 168 (TK), and Arg-185 each bind acetyl-CoA.

Belongs to the transferase hexapeptide repeat family. Homotrimer.

The protein resides in the cytoplasm. The enzyme catalyses a beta-D-galactoside + acetyl-CoA = a 6-acetyl-beta-D-galactoside + CoA. The protein is Galactoside O-acetyltransferase (lacA) of Lactococcus lactis subsp. lactis (strain IL1403) (Streptococcus lactis).